A 291-amino-acid chain; its full sequence is Light-independent protochlorophyllide reductase iron-sulfur ATP-binding protein (291 aa).

Residues Gly10–Thr15 and Lys39 contribute to the ATP site. Residue Ser14 coordinates Mg(2+). Cys95 and Cys129 together coordinate [4Fe-4S] cluster. Asn180 to Arg181 lines the ATP pocket.

Belongs to the NifH/BchL/ChlL family. Homodimer. Protochlorophyllide reductase is composed of three subunits; ChlL, ChlN and ChlB. Requires [4Fe-4S] cluster as cofactor.

The protein resides in the plastid. It is found in the chloroplast. The catalysed reaction is chlorophyllide a + oxidized 2[4Fe-4S]-[ferredoxin] + 2 ADP + 2 phosphate = protochlorophyllide a + reduced 2[4Fe-4S]-[ferredoxin] + 2 ATP + 2 H2O. Its pathway is porphyrin-containing compound metabolism; chlorophyll biosynthesis (light-independent). Component of the dark-operative protochlorophyllide reductase (DPOR) that uses Mg-ATP and reduced ferredoxin to reduce ring D of protochlorophyllide (Pchlide) to form chlorophyllide a (Chlide). This reaction is light-independent. The L component serves as a unique electron donor to the NB-component of the complex, and binds Mg-ATP. The polypeptide is Light-independent protochlorophyllide reductase iron-sulfur ATP-binding protein (Pinus contorta (Shore pine)).